We begin with the raw amino-acid sequence, 186 residues long: NADH-dependent FMN reductase SfnF (186 aa).

It belongs to the SsuE family.

The catalysed reaction is FMNH2 + NAD(+) = FMN + NADH + 2 H(+). Functionally, involved in the dimethyl sulfide degradation pathway. Catalyzes the NADH-dependent reduction of FMN. The protein is NADH-dependent FMN reductase SfnF of Pseudomonas putida (Arthrobacter siderocapsulatus).